Consider the following 253-residue polypeptide: Phosphate import ATP-binding protein PstB (253 aa).

The 241-residue stretch at 8–248 (IQVRDLDLFY…PRDKRTEDYI (241 aa)) folds into the ABC transporter domain. 40-47 (GPSGCGKS) serves as a coordination point for ATP.

This sequence belongs to the ABC transporter superfamily. Phosphate importer (TC 3.A.1.7) family. In terms of assembly, the complex is composed of two ATP-binding proteins (PstB), two transmembrane proteins (PstC and PstA) and a solute-binding protein (PstS).

It is found in the cell membrane. It catalyses the reaction phosphate(out) + ATP + H2O = ADP + 2 phosphate(in) + H(+). Functionally, part of the ABC transporter complex PstSACB involved in phosphate import. Responsible for energy coupling to the transport system. The chain is Phosphate import ATP-binding protein PstB from Clostridium perfringens (strain ATCC 13124 / DSM 756 / JCM 1290 / NCIMB 6125 / NCTC 8237 / Type A).